The chain runs to 193 residues: Xanthine phosphoribosyltransferase (193 aa).

The xanthine site is built by leucine 20 and asparagine 27. 129-133 (ANGKA) provides a ligand contact to 5-phospho-alpha-D-ribose 1-diphosphate. Lysine 157 serves as a coordination point for xanthine.

It belongs to the purine/pyrimidine phosphoribosyltransferase family. Xpt subfamily. As to quaternary structure, homodimer.

Its subcellular location is the cytoplasm. It carries out the reaction XMP + diphosphate = xanthine + 5-phospho-alpha-D-ribose 1-diphosphate. It functions in the pathway purine metabolism; XMP biosynthesis via salvage pathway; XMP from xanthine: step 1/1. Functionally, converts the preformed base xanthine, a product of nucleic acid breakdown, to xanthosine 5'-monophosphate (XMP), so it can be reused for RNA or DNA synthesis. This chain is Xanthine phosphoribosyltransferase, found in Bifidobacterium adolescentis (strain ATCC 15703 / DSM 20083 / NCTC 11814 / E194a).